Consider the following 217-residue polypeptide: Melanocortin-2 receptor accessory protein 2A (217 aa).

Asparagine 8 carries an N-linked (GlcNAc...) asparagine glycan. Residues 42 to 62 (IVIGFWVGLAVFVIFMFFVLT) form a helical membrane-spanning segment.

The protein belongs to the MRAP family. In terms of assembly, interacts with mc4r.

It localises to the cell membrane. Its subcellular location is the endoplasmic reticulum membrane. Inhibitor of melanocortin receptor 4 (mc4r), a receptor involved in energy homeostasis. Plays a role during larval development in the control of energy homeostasis and body weight regulation by decreasing ligand-sensitivity of mc4r and mc4r-mediated generation of cAMP, leading to stimulate growth during larval development. Acts by stabilizing an inactive conformation of mc4r during embryonic development, when all the energy consumed is obtained from the yolk sac, possibly to speed the rapid maturation to the mobile free-feeding juvenile stage reached at 5 dpf. This is Melanocortin-2 receptor accessory protein 2A (mrap2a) from Danio rerio (Zebrafish).